The following is a 253-amino-acid chain: Aspartate/glutamate leucyltransferase (253 aa).

It belongs to the R-transferase family. Bpt subfamily.

It localises to the cytoplasm. It catalyses the reaction N-terminal L-glutamyl-[protein] + L-leucyl-tRNA(Leu) = N-terminal L-leucyl-L-glutamyl-[protein] + tRNA(Leu) + H(+). The enzyme catalyses N-terminal L-aspartyl-[protein] + L-leucyl-tRNA(Leu) = N-terminal L-leucyl-L-aspartyl-[protein] + tRNA(Leu) + H(+). Functions in the N-end rule pathway of protein degradation where it conjugates Leu from its aminoacyl-tRNA to the N-termini of proteins containing an N-terminal aspartate or glutamate. This Allorhizobium ampelinum (strain ATCC BAA-846 / DSM 112012 / S4) (Agrobacterium vitis (strain S4)) protein is Aspartate/glutamate leucyltransferase.